Reading from the N-terminus, the 429-residue chain is tRNA-2-methylthio-N(6)-dimethylallyladenosine synthase (429 aa).

One can recognise an MTTase N-terminal domain in the interval 2–115; the sequence is KLLYLQTLGC…ISEAVKTPKF (114 aa). [4Fe-4S] cluster is bound by residues C11, C46, C78, C147, C151, and C154. Residues 133-365 enclose the Radical SAM core domain; sequence RGSPYKAFVN…QSRHNEILDE (233 aa). Positions 368-429 constitute a TRAM domain; the sequence is KNQVGKIFDV…RMVLYGKITA (62 aa).

This sequence belongs to the methylthiotransferase family. MiaB subfamily. Monomer. [4Fe-4S] cluster serves as cofactor.

The protein resides in the cytoplasm. The catalysed reaction is N(6)-dimethylallyladenosine(37) in tRNA + (sulfur carrier)-SH + AH2 + 2 S-adenosyl-L-methionine = 2-methylsulfanyl-N(6)-dimethylallyladenosine(37) in tRNA + (sulfur carrier)-H + 5'-deoxyadenosine + L-methionine + A + S-adenosyl-L-homocysteine + 2 H(+). Its function is as follows. Catalyzes the methylthiolation of N6-(dimethylallyl)adenosine (i(6)A), leading to the formation of 2-methylthio-N6-(dimethylallyl)adenosine (ms(2)i(6)A) at position 37 in tRNAs that read codons beginning with uridine. The polypeptide is tRNA-2-methylthio-N(6)-dimethylallyladenosine synthase (Campylobacter hominis (strain ATCC BAA-381 / DSM 21671 / CCUG 45161 / LMG 19568 / NCTC 13146 / CH001A)).